The primary structure comprises 802 residues: Leucine--tRNA ligase (802 aa).

The 'HIGH' region signature appears at P40–H51. Positions K576 to S580 match the 'KMSKS' region motif. K579 is an ATP binding site.

This sequence belongs to the class-I aminoacyl-tRNA synthetase family.

It is found in the cytoplasm. The catalysed reaction is tRNA(Leu) + L-leucine + ATP = L-leucyl-tRNA(Leu) + AMP + diphosphate. The chain is Leucine--tRNA ligase from Bacillus cereus (strain ATCC 10987 / NRS 248).